Here is a 524-residue protein sequence, read N- to C-terminus: Secologanin synthase 1 (524 aa).

Residues 1 to 11 (MEMDMDTIRKA) lie on the Lumenal side of the membrane. A helical transmembrane segment spans residues 12–32 (IAATIFALVMAWAWRVLDWAW). The Cytoplasmic segment spans residues 33-524 (FTPKRIEKRL…SHVIYKKLES (492 aa)). Residue Cys470 coordinates heme.

It belongs to the cytochrome P450 family. Heme serves as cofactor. In terms of tissue distribution, upper and lower leaf epidermis.

It is found in the endoplasmic reticulum membrane. It carries out the reaction loganin + reduced [NADPH--hemoprotein reductase] + O2 = secologanin + oxidized [NADPH--hemoprotein reductase] + 2 H2O + H(+). The catalysed reaction is secologanin + reduced [NADPH--hemoprotein reductase] + O2 = secoxyloganin + oxidized [NADPH--hemoprotein reductase] + H2O + 2 H(+). The protein operates within alkaloid biosynthesis; secologanin biosynthesis. In terms of biological role, component of the seco-iridoid and derivatives monoterpenoid indole alkaloids (MIAs, e.g. secologanin) biosynthesis pathway. Catalyzes the conversion of loganin into secologanin. Catalyzes the conversion of secologanin into secoxyloganin. The chain is Secologanin synthase 1 from Catharanthus roseus (Madagascar periwinkle).